The primary structure comprises 323 residues: Malate dehydrogenase (323 aa).

Residues Gly-20–Gly-25 and Asp-44 each bind NAD(+). The substrate site is built by Arg-93 and Arg-99. NAD(+)-binding positions include Asn-106 and Val-129–Asn-131. Substrate contacts are provided by Asn-131 and Arg-162. His-186 acts as the Proton acceptor in catalysis.

The protein belongs to the LDH/MDH superfamily. MDH type 3 family.

It catalyses the reaction (S)-malate + NAD(+) = oxaloacetate + NADH + H(+). Functionally, catalyzes the reversible oxidation of malate to oxaloacetate. This chain is Malate dehydrogenase, found in Nostoc sp. (strain PCC 7120 / SAG 25.82 / UTEX 2576).